Reading from the N-terminus, the 871-residue chain is Mitochondrial 15S rRNA processing factor CCM1 (871 aa).

The transit peptide at 1 to 72 directs the protein to the mitochondrion; that stretch reads MLGRRLAGAK…EFKLRQLREF (72 aa). PPR repeat units follow at residues 333–369 and 370–404; these read NKEN…DHKP and DAKT…KVDP. Residues 704–724 are disordered; it reads RPGSSTHLTHSEIKKQPSSQT.

The protein belongs to the CCM1 family. Binds to mitochondrial small subunit 15S rRNA.

Its subcellular location is the mitochondrion. Its function is as follows. Regulates mitochondrial small subunit maturation by controlling 15S rRNA 5'-end processing. Localizes to the 5' precursor of the 15S rRNA in a position that is subsequently occupied by mS47 in the mature yeast mtSSU. Uses structure and sequence-specific RNA recognition, binding to a single-stranded region of the precursor and specifically recognizing bases -6 to -1. The exchange of Ccm1 for mS47 is coupled to the irreversible removal of precursor rRNA that is accompanied by conformational changes of the mitoribosomal proteins uS5m and mS26. These conformational changes signal completion of 5'-end rRNA processing through protection of the mature 5'-end of the 15S rRNA and stabilization of mS47. The removal of the 5' precursor together with the dissociation of Ccm1 may be catalyzed by the 5'-3' exoribonuclease Pet127. Involved in the specific removal of group I introns in mitochondrial encoded transcripts. The polypeptide is Mitochondrial 15S rRNA processing factor CCM1 (CCM1) (Lachancea thermotolerans (strain ATCC 56472 / CBS 6340 / NRRL Y-8284) (Yeast)).